The primary structure comprises 143 residues: MMINAKKLMKMAKKWQQRAALHRKRISFQRSNVFTSSSSTVEKGCFVVYTADKIRFAFPISYLSNSIVQELLKISEEEFGLPTEGPITLPFDSVFLEYLIKLIQRRMDGDTEKALLMSISSAKCSLQCSLLQQEQSTQQLLVL.

Belongs to the ARG7 family.

Its subcellular location is the cell membrane. May promote auxin-stimulated organ elongation, such as hypocotyls, stamen filaments and petals. This chain is Auxin-responsive protein SAUR67, found in Arabidopsis thaliana (Mouse-ear cress).